A 731-amino-acid chain; its full sequence is MNDQQPFSVTASPTTEKTSAFSLTIRPDNIGVISIDVPGERVNTLKSEFAEQILSVFELARQHATLRGLIFISAKPDSFIAGADITMLNKCSSAEQAENLAKQGQETFDQIAALPFPVVAAIHGACLGGGLELALACDYRVCSLDEKTVLGLPEVQLGLLPGSGGTQRLPRLIGLDSALDLILTGRHLRAGQALRQGLVDEAVPHDILLDTAVEILKKGKRKAVPLGWRSRLLNSPGIRHLLFKMVKRKTRAKTHGNYPATEKIIQVVRRGIEKGREEGYRHEARAFGKLVMTPESAALRHLFFATNALKKTSGAASEAKPIHRVGILGGGLMGGGIASVTATRGQLPVRIKDINEQGINHALKYNWQLLTKRVQSKRMKPTERQRLMTLISGSTDYRGFEHADIVIEAVFEDLALKRQMITEIEDHAAPHTIFASNTSSLPIHQIAEGARRPQLVVGLHYFSPVDKMPLVEVIPHAHTSAETVATTVALARKQGKTAIVVGDSAGFYVNRILAPYINEAAYCLLEGEPIESIDYALVRFGFPVGPLALLDEVGIDVATKIVPVLSEELGDRFTSPPAFDAILKDGRKGRKNGKGFYRYNKTRRFWHSGKEVDSSVYPLLDVTPKAHIDPALISQRAVMMMLNEAARCLDEGVIQCARDGDIGAVFGIGFPPFLGGPFHYMDRLGMETVVKTLLVLQQQYGDRFAPCERLLTMREGQRTFYPPADKDNSIS.

Residues 15–204 form an enoyl-CoA hydratase region; sequence TEKTSAFSLT…RQGLVDEAVP (190 aa). Residues 320-729 are 3-hydroxyacyl-CoA dehydrogenase; it reads KPIHRVGILG…FYPPADKDNS (410 aa).

It in the N-terminal section; belongs to the enoyl-CoA hydratase/isomerase family. In the central section; belongs to the 3-hydroxyacyl-CoA dehydrogenase family. In terms of assembly, heterotetramer of two alpha chains (FadJ) and two beta chains (FadI).

Its subcellular location is the cytoplasm. It carries out the reaction a (3S)-3-hydroxyacyl-CoA = a (2E)-enoyl-CoA + H2O. The enzyme catalyses a 4-saturated-(3S)-3-hydroxyacyl-CoA = a (3E)-enoyl-CoA + H2O. It catalyses the reaction a (3S)-3-hydroxyacyl-CoA + NAD(+) = a 3-oxoacyl-CoA + NADH + H(+). The catalysed reaction is (3S)-3-hydroxybutanoyl-CoA = (3R)-3-hydroxybutanoyl-CoA. The protein operates within lipid metabolism; fatty acid beta-oxidation. Catalyzes the formation of a hydroxyacyl-CoA by addition of water on enoyl-CoA. Also exhibits 3-hydroxyacyl-CoA epimerase and 3-hydroxyacyl-CoA dehydrogenase activities. The sequence is that of Fatty acid oxidation complex subunit alpha from Pectobacterium atrosepticum (strain SCRI 1043 / ATCC BAA-672) (Erwinia carotovora subsp. atroseptica).